The following is a 142-amino-acid chain: Large ribosomal subunit protein uL13 (142 aa).

This sequence belongs to the universal ribosomal protein uL13 family. As to quaternary structure, part of the 50S ribosomal subunit.

Functionally, this protein is one of the early assembly proteins of the 50S ribosomal subunit, although it is not seen to bind rRNA by itself. It is important during the early stages of 50S assembly. The sequence is that of Large ribosomal subunit protein uL13 from Baumannia cicadellinicola subsp. Homalodisca coagulata.